We begin with the raw amino-acid sequence, 87 residues long: Small ribosomal subunit protein bS20 (87 aa).

The interval 1–20 (MANHKSAEKRARQTIKRTER) is disordered.

The protein belongs to the bacterial ribosomal protein bS20 family.

Functionally, binds directly to 16S ribosomal RNA. This Campylobacter lari (strain RM2100 / D67 / ATCC BAA-1060) protein is Small ribosomal subunit protein bS20.